A 318-amino-acid chain; its full sequence is Olfactory receptor 2T34 (318 aa).

The Extracellular portion of the chain corresponds to 1–30; it reads MCSGNQTSQNQTASTDFTLTGLFAESKHAA. Residues N5 and N10 are each glycosylated (N-linked (GlcNAc...) asparagine). The chain crosses the membrane as a helical span at residues 31-54; that stretch reads LLYTVTFLLFLMALTGNALLILLI. At 55–62 the chain is on the cytoplasmic side; the sequence is HSEPRLHT. A helical transmembrane segment spans residues 63-84; sequence PMYFFISQLALMDLMYLCVTVP. Residues 85–105 lie on the Extracellular side of the membrane; sequence KMLVGQVTGDDTISPSGCGIQ. An intrachain disulfide couples C102 to C194. A helical membrane pass occupies residues 106–125; sequence MFFHLTLAGAEVFLLAAMAY. Topologically, residues 126–144 are cytoplasmic; it reads DRYAAVCRPLHYPLLMNQR. The chain crosses the membrane as a helical span at residues 145–163; it reads VCQLLVSACWVLGMVDGLL. The Extracellular portion of the chain corresponds to 164-200; the sequence is LTPITMSFPFCQSRKILSFFCETPALLKLSCSDVSLY. Residues 201–224 form a helical membrane-spanning segment; sequence KMLTYLCCILMLLTPIMVISSSYT. Over 225–241 the chain is Cytoplasmic; sequence LILHLIHRMNSAAGRRK. A helical transmembrane segment spans residues 242–264; it reads ALATCSSHMIIVLLLFGASFYTY. Residues 265-277 lie on the Extracellular side of the membrane; it reads MLRSSYHTAEQDM. The helical transmembrane segment at 278-297 threads the bilayer; the sequence is MVSAFYTIFTPVLNPLIYSL. Topologically, residues 298–318 are cytoplasmic; it reads RNKDVTRALRSMMQSRMNQEK.

It belongs to the G-protein coupled receptor 1 family.

The protein resides in the cell membrane. Functionally, odorant receptor. In Homo sapiens (Human), this protein is Olfactory receptor 2T34 (OR2T34).